The following is a 354-amino-acid chain: FAD synthetase 1, chloroplastic (354 aa).

The transit peptide at 1–75 (MLCGGSRASV…SQGDDHPELS (75 aa)) directs the protein to the chloroplast. Residues 228–248 (SVNTEEEDSKSKERGQVSSTR) are disordered.

The cofactor is Mg(2+).

It is found in the plastid. The protein resides in the chloroplast. The catalysed reaction is FMN + ATP + H(+) = FAD + diphosphate. It participates in cofactor biosynthesis; FAD biosynthesis; FAD from FMN: step 1/1. Its function is as follows. Catalyzes the adenylation of flavin mononucleotide (FMN) to form flavin adenine dinucleotide (FAD) coenzyme. The protein is FAD synthetase 1, chloroplastic of Arabidopsis thaliana (Mouse-ear cress).